A 73-amino-acid chain; its full sequence is MGSFSIWHWVIVLVVVVLIFGTKKLRNVGQDLGGAVKGFKEGMKSEGEDAAQTPPAAQKEGGRVIDAEPADKK.

A helical transmembrane segment spans residues 1–21 (MGSFSIWHWVIVLVVVVLIFG). Residues 43-73 (MKSEGEDAAQTPPAAQKEGGRVIDAEPADKK) form a disordered region. Residues 60–73 (EGGRVIDAEPADKK) are compositionally biased toward basic and acidic residues.

The protein belongs to the TatA/E family. The Tat system comprises two distinct complexes: a TatABC complex, containing multiple copies of TatA, TatB and TatC subunits, and a separate TatA complex, containing only TatA subunits. Substrates initially bind to the TatABC complex, which probably triggers association of the separate TatA complex to form the active translocon.

Its subcellular location is the cell inner membrane. Functionally, part of the twin-arginine translocation (Tat) system that transports large folded proteins containing a characteristic twin-arginine motif in their signal peptide across membranes. TatA could form the protein-conducting channel of the Tat system. This is Sec-independent protein translocase protein TatA from Laribacter hongkongensis (strain HLHK9).